Reading from the N-terminus, the 339-residue chain is Ketol-acid reductoisomerase (NADP(+)) (339 aa).

The KARI N-terminal Rossmann domain occupies 1 to 182 (MRVYYDRDAD…GGGRAGIIET (182 aa)). NADP(+) is bound by residues 24–27 (YGSQ), Arg-48, Ser-51, Ser-53, and 83–86 (DELQ). The active site involves His-108. Residue Gly-134 participates in NADP(+) binding. In terms of domain architecture, KARI C-terminal knotted spans 183-328 (TFKEECETDL…ERLRGMMPWI (146 aa)). Mg(2+) contacts are provided by Asp-191, Glu-195, Glu-227, and Glu-231. Residue Ser-252 participates in substrate binding.

The protein belongs to the ketol-acid reductoisomerase family. Mg(2+) serves as cofactor.

The enzyme catalyses (2R)-2,3-dihydroxy-3-methylbutanoate + NADP(+) = (2S)-2-acetolactate + NADPH + H(+). It catalyses the reaction (2R,3R)-2,3-dihydroxy-3-methylpentanoate + NADP(+) = (S)-2-ethyl-2-hydroxy-3-oxobutanoate + NADPH + H(+). It participates in amino-acid biosynthesis; L-isoleucine biosynthesis; L-isoleucine from 2-oxobutanoate: step 2/4. Its pathway is amino-acid biosynthesis; L-valine biosynthesis; L-valine from pyruvate: step 2/4. In terms of biological role, involved in the biosynthesis of branched-chain amino acids (BCAA). Catalyzes an alkyl-migration followed by a ketol-acid reduction of (S)-2-acetolactate (S2AL) to yield (R)-2,3-dihydroxy-isovalerate. In the isomerase reaction, S2AL is rearranged via a Mg-dependent methyl migration to produce 3-hydroxy-3-methyl-2-ketobutyrate (HMKB). In the reductase reaction, this 2-ketoacid undergoes a metal-dependent reduction by NADPH to yield (R)-2,3-dihydroxy-isovalerate. In Methylobacterium sp. (strain 4-46), this protein is Ketol-acid reductoisomerase (NADP(+)).